The chain runs to 481 residues: Aspartyl/glutamyl-tRNA(Asn/Gln) amidotransferase subunit B (481 aa).

This sequence belongs to the GatB/GatE family. GatB subfamily. Heterotrimer of A, B and C subunits.

The catalysed reaction is L-glutamyl-tRNA(Gln) + L-glutamine + ATP + H2O = L-glutaminyl-tRNA(Gln) + L-glutamate + ADP + phosphate + H(+). It catalyses the reaction L-aspartyl-tRNA(Asn) + L-glutamine + ATP + H2O = L-asparaginyl-tRNA(Asn) + L-glutamate + ADP + phosphate + 2 H(+). Functionally, allows the formation of correctly charged Asn-tRNA(Asn) or Gln-tRNA(Gln) through the transamidation of misacylated Asp-tRNA(Asn) or Glu-tRNA(Gln) in organisms which lack either or both of asparaginyl-tRNA or glutaminyl-tRNA synthetases. The reaction takes place in the presence of glutamine and ATP through an activated phospho-Asp-tRNA(Asn) or phospho-Glu-tRNA(Gln). This Pseudomonas entomophila (strain L48) protein is Aspartyl/glutamyl-tRNA(Asn/Gln) amidotransferase subunit B.